A 218-amino-acid chain; its full sequence is Small ribosomal subunit protein uS3c (218 aa).

Residues 47–118 form the KH type-2 domain; the sequence is VQKNMKTSSG…KLNIAITRIE (72 aa).

It belongs to the universal ribosomal protein uS3 family. Part of the 30S ribosomal subunit.

It localises to the plastid. It is found in the chloroplast. This Lactuca sativa (Garden lettuce) protein is Small ribosomal subunit protein uS3c (rps3).